The primary structure comprises 575 residues: Thiol:disulfide interchange protein DsbD (575 aa).

The signal sequence occupies residues 1 to 24 (MIKRTLMLFLLLCSPLLTPAAANA). 2 cysteine pairs are disulfide-bonded: C126/C132 and C192/C314. 8 helical membrane passes run 180–200 (AILIGIGIAFTPCVLPMYPLI), 216–236 (IFWLALSYVQGMAVTYTLLGL), 253–273 (YVLIGLSVLFILLALSMFGLY), 297–317 (LFGVFAMGALAGLICSPCTTA), 336–356 (GLTLYLYALGMGLPLIAVTLF), 367–387 (WMQYVKEAFGFIILALPVFLL), 394–414 (AWGIRLWSLLAVSFLGWGFVL), and 425–445 (VIQLILLILMLIATRPLQDWF). In terms of domain architecture, Thioredoxin spans 444 to 575 (WFWGTTVTQQ…FNEHLQHLPK (132 aa)). C490 and C493 are disulfide-bonded.

This sequence belongs to the thioredoxin family. DsbD subfamily.

The protein localises to the cell inner membrane. It carries out the reaction [protein]-dithiol + NAD(+) = [protein]-disulfide + NADH + H(+). The catalysed reaction is [protein]-dithiol + NADP(+) = [protein]-disulfide + NADPH + H(+). Required to facilitate the formation of correct disulfide bonds in some periplasmic proteins and for the assembly of the periplasmic c-type cytochromes. Acts by transferring electrons from cytoplasmic thioredoxin to the periplasm. This transfer involves a cascade of disulfide bond formation and reduction steps. This is Thiol:disulfide interchange protein DsbD from Photorhabdus laumondii subsp. laumondii (strain DSM 15139 / CIP 105565 / TT01) (Photorhabdus luminescens subsp. laumondii).